The sequence spans 317 residues: 4-diphosphocytidyl-2-C-methyl-D-erythritol kinase (317 aa).

Residue Lys-11 is part of the active site. ATP is bound at residue 99–109 (PVAAGLAGGST). Residue Asp-141 is part of the active site.

The protein belongs to the GHMP kinase family. IspE subfamily.

It catalyses the reaction 4-CDP-2-C-methyl-D-erythritol + ATP = 4-CDP-2-C-methyl-D-erythritol 2-phosphate + ADP + H(+). Its pathway is isoprenoid biosynthesis; isopentenyl diphosphate biosynthesis via DXP pathway; isopentenyl diphosphate from 1-deoxy-D-xylulose 5-phosphate: step 3/6. In terms of biological role, catalyzes the phosphorylation of the position 2 hydroxy group of 4-diphosphocytidyl-2C-methyl-D-erythritol. The chain is 4-diphosphocytidyl-2-C-methyl-D-erythritol kinase from Nostoc punctiforme (strain ATCC 29133 / PCC 73102).